The sequence spans 366 residues: tRNA(Met) cytidine acetate ligase (366 aa).

ATP contacts are provided by residues 7-20 (VAEF…HKYL), Gly96, Asn152, and Arg175.

Belongs to the TmcAL family.

It localises to the cytoplasm. It carries out the reaction cytidine(34) in elongator tRNA(Met) + acetate + ATP = N(4)-acetylcytidine(34) in elongator tRNA(Met) + AMP + diphosphate. Its function is as follows. Catalyzes the formation of N(4)-acetylcytidine (ac(4)C) at the wobble position of elongator tRNA(Met), using acetate and ATP as substrates. First activates an acetate ion to form acetyladenylate (Ac-AMP) and then transfers the acetyl group to tRNA to form ac(4)C34. This chain is tRNA(Met) cytidine acetate ligase, found in Streptococcus uberis (strain ATCC BAA-854 / 0140J).